We begin with the raw amino-acid sequence, 144 residues long: Prefoldin subunit alpha (144 aa).

Belongs to the prefoldin subunit alpha family. Heterohexamer of two alpha and four beta subunits.

The protein resides in the cytoplasm. Molecular chaperone capable of stabilizing a range of proteins. Seems to fulfill an ATP-independent, HSP70-like function in archaeal de novo protein folding. This Methanosarcina barkeri (strain Fusaro / DSM 804) protein is Prefoldin subunit alpha.